Consider the following 645-residue polypeptide: Sentrin-specific protease 1 (645 aa).

The interaction with CCAR2 stretch occupies residues methionine 1–methionine 200. 3 positions are modified to phosphoserine: serine 57, serine 117, and serine 157. The disordered stretch occupies residues glutamine 92–serine 117. The span at arginine 99 to serine 117 shows a compositional bias: low complexity. The Nuclear localization signal signature appears at proline 171–arginine 177. Positions lysine 285–serine 313 are disordered. 2 protease regions span residues leucine 451–cysteine 614 and leucine 451–isoleucine 615. Active-site residues include histidine 534 and aspartate 551. A Nuclear localization signal motif is present at residues lysine 575 to lysine 578. Cysteine 604 acts as the Nucleophile in catalysis. Positions proline 629 to methionine 635 match the Nuclear localization signal motif. The short motif at valine 636 to leucine 645 is the Nuclear export signal element.

This sequence belongs to the peptidase C48 family. In terms of assembly, interacts with RBM33; promoting ALKBH5 desumoylation and subsequent activation.

Its subcellular location is the nucleus. It is found in the cytoplasm. Protease that catalyzes two essential functions in the SUMO pathway. The first is the hydrolysis of an alpha-linked peptide bond at the C-terminal end of the small ubiquitin-like modifier (SUMO) propeptides, SUMO1, SUMO2 and SUMO3 leading to the mature form of the proteins. The second is the deconjugation of SUMO1, SUMO2 and SUMO3 from targeted proteins, by cleaving an epsilon-linked peptide bond between the C-terminal glycine of the mature SUMO and the lysine epsilon-amino group of the target protein. Deconjugates SUMO1 from HIPK2. Deconjugates SUMO1 from HDAC1 and BHLHE40/DEC1, which decreases its transcriptional repression activity. Deconjugates SUMO1 from CLOCK, which decreases its transcriptional activation activity. Deconjugates SUMO2 from MTA1. Inhibits N(6)-methyladenosine (m6A) RNA methylation by mediating SUMO1 deconjugation from METTL3 and ALKBH5: METTL3 inhibits the m6A RNA methyltransferase activity, while ALKBH5 desumoylation promotes m6A demethylation. Desumoylates CCAR2 which decreases its interaction with SIRT1. Deconjugates SUMO1 from GPS2. The sequence is that of Sentrin-specific protease 1 (SENP1) from Pongo abelii (Sumatran orangutan).